A 1030-amino-acid polypeptide reads, in one-letter code: ATPase MORC2A (1030 aa).

An N-acetylalanine modification is found at alanine 2. ATP-binding positions include asparagine 39, 87-89 (SAK), and 99-105 (QYGNGLK). Asparagine 39 provides a ligand contact to Mg(2+). Positions 285 to 362 (KTRAEQEVKK…KDAKQRALKE (78 aa)) form a coiled coil. Lysine 427 is a binding site for ATP. Residues 490–544 (AMEIPTTIQCDLCLKWRTLPFQLSSVETDYPDTWVCSMNPDPEQDRCEASEQKQK) form a CW-type zinc finger. 4 residues coordinate Zn(2+): cysteine 499, cysteine 502, cysteine 525, and cysteine 536. The tract at residues 530 to 791 (DPEQDRCEAS…HPAELRKAQK (262 aa)) is disordered. Composition is skewed to basic and acidic residues over residues 532–543 (EQDRCEASEQKQ) and 550–577 (LKKD…KLEA). The stretch at 555 to 583 (KTQEEKQKQLTEKIRQQQEKLEALQKTTP) forms a coiled coil. Threonine 582 is subject to Phosphothreonine. A Phosphoserine modification is found at serine 614. Over residues 629-646 (PSIQTPRPSTQLRKTSVI) the composition is skewed to polar residues. Residues lysine 650 and lysine 702 each participate in a glycyl lysine isopeptide (Lys-Gly) (interchain with G-Cter in SUMO2) cross-link. Positions 693–702 (PPLSLIPSSK) are enriched in low complexity. Residue serine 703 is modified to Phosphoserine. A Glycyl lysine isopeptide (Lys-Gly) (interchain with G-Cter in SUMO2) cross-link involves residue lysine 714. Residue serine 728 is modified to Phosphoserine. Threonine 731 is modified (phosphothreonine). Phosphoserine is present on residues serine 737 and serine 741. Positions 738-775 (LAVSDEEEAEEEAEKRRERCKRGKLAVKEEKKEANELS) form a coiled coil. Basic and acidic residues predominate over residues 763–772 (AVKEEKKEAN). A Glycyl lysine isopeptide (Lys-Gly) (interchain with G-Cter in SUMO2) cross-link involves residue lysine 765. Phosphoserine occurs at positions 775 and 777. A compositionally biased stretch (basic and acidic residues) spans 779 to 791 (GEDHPAELRKAQK). Residue lysine 817 forms a Glycyl lysine isopeptide (Lys-Gly) (interchain with G-Cter in SUMO2) linkage. A Phosphothreonine modification is found at threonine 834. Positions 837–849 (DRWVEKGSEDVRL) are enriched in basic and acidic residues. Disordered stretches follow at residues 837 to 874 (DRWV…EAMV) and 882 to 901 (PEPS…ATSP). Phosphoserine is present on residues serine 854 and serine 859. Positions 856-865 (EHQSPDTQQE) are enriched in polar residues. Lysine 930 participates in a covalent cross-link: Glycyl lysine isopeptide (Lys-Gly) (interchain with G-Cter in SUMO2). Residues 966-1011 (RADSRAKASEESLRTSEKKLRETEEKLQKLRTNIVALLQKVQEDID) adopt a coiled-coil conformation.

In terms of assembly, homodimerizes upon ATP-binding and dissociate upon ATP hydrolysis; homodimerization is required for gene silencing. Binds histone H3 independently of the methylation status at 'Lys-9'. Interacts with HDAC4. Interacts with FAM208A/TASOR and MPHOSPH8; the interactions associate MORC2 with the HUSH complex which recruits MORC2 to heterochromatic loci. Interacts with Morc2b. In terms of processing, phosphorylated by PAK1 at Ser-737 upon DNA damage. Phosphorylation is required for ATPase activity and recruitment to damaged chromatin. Expressed in the axons and Schwann cells of peripheral nerves. Expressed in testes.

It localises to the nucleus. It is found in the cytoplasm. The protein localises to the cytosol. The protein resides in the chromosome. Its subcellular location is the nucleus matrix. It catalyses the reaction ATP + H2O = ADP + phosphate + H(+). ATPase activity is dependent of phosphorylation by PAK1 and presence of DNA. Its function is as follows. Essential for epigenetic silencing by the HUSH complex. Recruited by HUSH to target site in heterochromatin, the ATPase activity and homodimerization are critical for HUSH-mediated silencing. Represses germ cell-related genes and L1 retrotransposons in collaboration with SETDB1 and the HUSH complex, the silencing is dependent of repressive epigenetic modifications, such as H3K9me3 mark. Silencing events often occur within introns of transcriptionally active genes, and lead to the down-regulation of host gene expression. During DNA damage response, regulates chromatin remodeling through ATP hydrolysis. During DNA damage response, may regulate chromatin remodeling through ATP hydrolysis. The protein is ATPase MORC2A of Mus musculus (Mouse).